The following is a 609-amino-acid chain: ATP-dependent lipid A-core flippase (609 aa).

6 helical membrane passes run 47-67 (LLAA…IYLI), 88-108 (ILML…VGSF), 167-187 (AIIT…VMFV), 190-210 (WQLS…ISII), 279-299 (VIQI…AIFG), and 305-325 (GSSW…AAIL). In terms of domain architecture, ABC transmembrane type-1 spans 47-340 (LLAAIGSIFF…LTKVNVVIQK (294 aa)). In terms of domain architecture, ABC transporter spans 372–606 (VTIKDLSFAF…GGLYTRLYQS (235 aa)). 404–411 (GKSGSGKT) contributes to the ATP binding site.

This sequence belongs to the ABC transporter superfamily. Lipid exporter (TC 3.A.1.106) family. As to quaternary structure, homodimer.

Its subcellular location is the cell inner membrane. It catalyses the reaction ATP + H2O + lipid A-core oligosaccharideSide 1 = ADP + phosphate + lipid A-core oligosaccharideSide 2.. Functionally, involved in lipopolysaccharide (LPS) biosynthesis. Translocates lipid A-core from the inner to the outer leaflet of the inner membrane. Transmembrane domains (TMD) form a pore in the inner membrane and the ATP-binding domain (NBD) is responsible for energy generation. This is ATP-dependent lipid A-core flippase from Francisella tularensis subsp. tularensis (strain FSC 198).